Here is a 572-residue protein sequence, read N- to C-terminus: 2-succinyl-5-enolpyruvyl-6-hydroxy-3-cyclohexene-1-carboxylate synthase (572 aa).

It belongs to the TPP enzyme family. MenD subfamily. In terms of assembly, homodimer. The cofactor is Mg(2+). Mn(2+) is required as a cofactor. Thiamine diphosphate serves as cofactor.

The enzyme catalyses isochorismate + 2-oxoglutarate + H(+) = 5-enolpyruvoyl-6-hydroxy-2-succinyl-cyclohex-3-ene-1-carboxylate + CO2. The protein operates within quinol/quinone metabolism; 1,4-dihydroxy-2-naphthoate biosynthesis; 1,4-dihydroxy-2-naphthoate from chorismate: step 2/7. Its pathway is quinol/quinone metabolism; menaquinone biosynthesis. Catalyzes the thiamine diphosphate-dependent decarboxylation of 2-oxoglutarate and the subsequent addition of the resulting succinic semialdehyde-thiamine pyrophosphate anion to isochorismate to yield 2-succinyl-5-enolpyruvyl-6-hydroxy-3-cyclohexene-1-carboxylate (SEPHCHC). In Shewanella amazonensis (strain ATCC BAA-1098 / SB2B), this protein is 2-succinyl-5-enolpyruvyl-6-hydroxy-3-cyclohexene-1-carboxylate synthase.